Consider the following 485-residue polypeptide: Probable coniferyl aldehyde dehydrogenase (485 aa).

Catalysis depends on residues Glu-226 and Cys-260.

It belongs to the aldehyde dehydrogenase family.

It catalyses the reaction (E)-coniferaldehyde + NADP(+) + H2O = (E)-ferulate + NADPH + 2 H(+). The catalysed reaction is (E)-coniferaldehyde + NAD(+) + H2O = (E)-ferulate + NADH + 2 H(+). The sequence is that of Probable coniferyl aldehyde dehydrogenase (calB) from Caulobacter vibrioides (strain ATCC 19089 / CIP 103742 / CB 15) (Caulobacter crescentus).